The sequence spans 422 residues: 3-phosphoshikimate 1-carboxyvinyltransferase (422 aa).

K20, S21, and R25 together coordinate 3-phosphoshikimate. Phosphoenolpyruvate is bound at residue K20. Positions 92 and 120 each coordinate phosphoenolpyruvate. 3-phosphoshikimate-binding residues include S163, S164, Q165, S191, D304, and K331. Phosphoenolpyruvate is bound at residue Q165. D304 acts as the Proton acceptor in catalysis. Positions 335 and 377 each coordinate phosphoenolpyruvate.

It belongs to the EPSP synthase family. In terms of assembly, monomer.

The protein resides in the cytoplasm. It carries out the reaction 3-phosphoshikimate + phosphoenolpyruvate = 5-O-(1-carboxyvinyl)-3-phosphoshikimate + phosphate. Its pathway is metabolic intermediate biosynthesis; chorismate biosynthesis. Its function is as follows. Catalyzes the transfer of the enolpyruvyl moiety of phosphoenolpyruvate (PEP) to the 5-hydroxyl of shikimate-3-phosphate (S3P) to produce enolpyruvyl shikimate-3-phosphate and inorganic phosphate. This chain is 3-phosphoshikimate 1-carboxyvinyltransferase, found in Methanocorpusculum labreanum (strain ATCC 43576 / DSM 4855 / Z).